Consider the following 176-residue polypeptide: Ribosome maturation factor RimP (176 aa).

This sequence belongs to the RimP family.

It localises to the cytoplasm. Required for maturation of 30S ribosomal subunits. The polypeptide is Ribosome maturation factor RimP (Chlorobium limicola (strain DSM 245 / NBRC 103803 / 6330)).